The primary structure comprises 300 residues: Ribosomal RNA small subunit methyltransferase H (300 aa).

S-adenosyl-L-methionine contacts are provided by residues 33-35, aspartate 53, phenylalanine 78, aspartate 97, and glutamine 104; that span reads GGH.

It belongs to the methyltransferase superfamily. RsmH family.

Its subcellular location is the cytoplasm. The enzyme catalyses cytidine(1402) in 16S rRNA + S-adenosyl-L-methionine = N(4)-methylcytidine(1402) in 16S rRNA + S-adenosyl-L-homocysteine + H(+). Specifically methylates the N4 position of cytidine in position 1402 (C1402) of 16S rRNA. The sequence is that of Ribosomal RNA small subunit methyltransferase H from Karelsulcia muelleri (strain GWSS) (Sulcia muelleri).